A 444-amino-acid chain; its full sequence is Transposase for insertion sequence element IS1557 (444 aa).

Residues 273 to 292 (PKWGRGRPGKNAAPRPGRER) form a disordered region.

The protein belongs to the transposase 12 family.

The chain is Transposase for insertion sequence element IS1557 from Mycobacterium tuberculosis (strain CDC 1551 / Oshkosh).